A 249-amino-acid polypeptide reads, in one-letter code: O-methyltransferase adaD (249 aa).

Positions 1 to 15 are enriched in low complexity; it reads MSSVTLTTTTTTTST. Residues 1–26 form a disordered region; it reads MSSVTLTTTTTTTSTPPKPTPKDEPQ.

This sequence belongs to the methyltransferase superfamily.

It carries out the reaction 2-acetyl-3,4a,8,10,11,12a-hexahydroxy-1,4,4a,5,12,12a-hexahydrotetracene-1,12-dione + S-adenosyl-L-methionine = TAN-1612 + S-adenosyl-L-homocysteine + H(+). It participates in secondary metabolite biosynthesis. In terms of biological role, O-methyltransferase; part of the gene cluster that mediates the biosynthesis of the linear tetracyclic TAN-1612 neuropeptide Y receptor antagonist. The decaketide backbone of TAN-1612 is synthesized by the non-reducing polyketide synthase adaA via condensation of one acetyl-CoA starter unit with 9 malonyl-CoA units. The FAD-dependent monooxygenase adaC then performs hydroxylation at C2 while the polaketide chain is still attached to the NRPKS adaA. The alpha-hydroxylation step at C2 appears to be crucial for the following C18-C1 Claisen cyclization and release of the C9-hydroxyl version of TAN-1612 from the NRPKS adaA, two steps performed by the lactamase-like protein adaB. Finally, the O-methyltransferase adaD performs the C9 O-methylation to complete the biosynthesis of TAN-1612. The protein is O-methyltransferase adaD of Aspergillus niger.